Here is a 327-residue protein sequence, read N- to C-terminus: Serine/threonine-protein phosphatase alpha-1 isoform (327 aa).

Mn(2+) is bound by residues Asp-62, His-64, Asp-90, and Asn-122. His-123 acts as the Proton donor in catalysis. The Mn(2+) site is built by His-171 and His-246. The segment at 308-327 (GSSGRPLTPPRGANNKNKKK) is disordered. A Phosphothreonine modification is found at Thr-315.

The protein belongs to the PPP phosphatase family. PP-1 subfamily. Interacts with Nop17l. The cofactor is Mn(2+).

The catalysed reaction is O-phospho-L-seryl-[protein] + H2O = L-seryl-[protein] + phosphate. It carries out the reaction O-phospho-L-threonyl-[protein] + H2O = L-threonyl-[protein] + phosphate. The sequence is that of Serine/threonine-protein phosphatase alpha-1 isoform (Pp1alpha-96A) from Drosophila melanogaster (Fruit fly).